Here is a 291-residue protein sequence, read N- to C-terminus: Alpha-soluble NSF attachment protein (291 aa).

TPR repeat units lie at residues Ala14 to Ser51, Ala77 to Glu110, Ala117 to Glu150, and His157 to Asn190.

It belongs to the SNAP family. In terms of assembly, interacts with nsfA and probably SNARE proteins.

Its subcellular location is the cytoplasmic vesicle membrane. In terms of biological role, may be required for vesicular transport between the endoplasmic reticulum and the Golgi apparatus. Involved in vesicle fusion with nsfA and probably SNARE proteins. The chain is Alpha-soluble NSF attachment protein (snpA) from Dictyostelium discoideum (Social amoeba).